The following is a 370-amino-acid chain: NADH-quinone oxidoreductase subunit D (370 aa).

This sequence belongs to the complex I 49 kDa subunit family. In terms of assembly, NDH-1 is composed of 14 different subunits. Subunits NuoB, C, D, E, F, and G constitute the peripheral sector of the complex.

It localises to the cell membrane. The enzyme catalyses a quinone + NADH + 5 H(+)(in) = a quinol + NAD(+) + 4 H(+)(out). Functionally, NDH-1 shuttles electrons from NADH, via FMN and iron-sulfur (Fe-S) centers, to quinones in the respiratory chain. The immediate electron acceptor for the enzyme in this species is believed to be a menaquinone. Couples the redox reaction to proton translocation (for every two electrons transferred, four hydrogen ions are translocated across the cytoplasmic membrane), and thus conserves the redox energy in a proton gradient. The polypeptide is NADH-quinone oxidoreductase subunit D (Clostridium beijerinckii (strain ATCC 51743 / NCIMB 8052) (Clostridium acetobutylicum)).